A 949-amino-acid polypeptide reads, in one-letter code: Protein translocase subunit SecA (949 aa).

Residues Gln-87, 105–109, and Asp-524 each bind ATP; that span reads GEGKT. 2 disordered regions span residues 852-876 and 896-939; these read PPPG…SSGG and LEFS…GSGK. The Zn(2+) site is built by Cys-933, Cys-935, Cys-944, and His-945.

Belongs to the SecA family. In terms of assembly, monomer and homodimer. Part of the essential Sec protein translocation apparatus which comprises SecA, SecYEG and auxiliary proteins SecDF-YajC and YidC. The cofactor is Zn(2+).

It localises to the cell inner membrane. It is found in the cytoplasm. It catalyses the reaction ATP + H2O + cellular proteinSide 1 = ADP + phosphate + cellular proteinSide 2.. Part of the Sec protein translocase complex. Interacts with the SecYEG preprotein conducting channel. Has a central role in coupling the hydrolysis of ATP to the transfer of proteins into and across the cell membrane, serving both as a receptor for the preprotein-SecB complex and as an ATP-driven molecular motor driving the stepwise translocation of polypeptide chains across the membrane. The protein is Protein translocase subunit SecA of Methylocella silvestris (strain DSM 15510 / CIP 108128 / LMG 27833 / NCIMB 13906 / BL2).